The chain runs to 232 residues: Large ribosomal subunit protein uL1 (232 aa).

This sequence belongs to the universal ribosomal protein uL1 family. Part of the 50S ribosomal subunit.

Binds directly to 23S rRNA. The L1 stalk is quite mobile in the ribosome, and is involved in E site tRNA release. In terms of biological role, protein L1 is also a translational repressor protein, it controls the translation of the L11 operon by binding to its mRNA. The protein is Large ribosomal subunit protein uL1 of Sinorhizobium medicae (strain WSM419) (Ensifer medicae).